A 108-amino-acid polypeptide reads, in one-letter code: Ig kappa chain V-V region HP R16.7 (108 aa).

The tract at residues 1–23 is framework-1; the sequence is DIQMTQTTSSLSASLGDRVTISC. A disulfide bridge links Cys23 with Cys88. A complementarity-determining-1 region spans residues 24-34; that stretch reads RASQDISNYLN. The segment at 35 to 49 is framework-2; it reads WYQQKPDGTVKLLIY. The tract at residues 50-56 is complementarity-determining-2; it reads YTSRLHS. Residues 57-88 are framework-3; the sequence is GVPSRFSGSGSGTDYSLTISNLEQEDIATYFC. Positions 89-97 are complementarity-determining-3; it reads QQGNSLPRT. The interval 98–108 is framework-4; it reads FGGGTKLEIKR.

This Mus musculus (Mouse) protein is Ig kappa chain V-V region HP R16.7.